The following is a 940-amino-acid chain: Isoleucine--tRNA ligase (940 aa).

Positions 58 to 68 (PYANGNIHIGH) match the 'HIGH' region motif. Residue Glu-563 coordinates L-isoleucyl-5'-AMP. Residues 604-608 (KMSKS) carry the 'KMSKS' region motif. Lys-607 lines the ATP pocket. Zn(2+) is bound by residues Cys-903, Cys-906, Cys-923, and Cys-926.

This sequence belongs to the class-I aminoacyl-tRNA synthetase family. IleS type 1 subfamily. In terms of assembly, monomer. Zn(2+) is required as a cofactor.

It localises to the cytoplasm. The enzyme catalyses tRNA(Ile) + L-isoleucine + ATP = L-isoleucyl-tRNA(Ile) + AMP + diphosphate. In terms of biological role, catalyzes the attachment of isoleucine to tRNA(Ile). As IleRS can inadvertently accommodate and process structurally similar amino acids such as valine, to avoid such errors it has two additional distinct tRNA(Ile)-dependent editing activities. One activity is designated as 'pretransfer' editing and involves the hydrolysis of activated Val-AMP. The other activity is designated 'posttransfer' editing and involves deacylation of mischarged Val-tRNA(Ile). The sequence is that of Isoleucine--tRNA ligase from Buchnera aphidicola subsp. Acyrthosiphon pisum (strain 5A).